Consider the following 319-residue polypeptide: 12-(S)-hydroxy-5,8,10,14-eicosatetraenoic acid receptor (319 aa).

Residues 1 to 16 (MERTNCSAASTVVETA) are Extracellular-facing. Asn-5 is a glycosylation site (N-linked (GlcNAc...) asparagine). Residues 17–37 (VGTMLTLECVLGLMGNAVALW) form a helical membrane-spanning segment. Topologically, residues 38 to 52 (TFFYRLKVWKPYAVY) are cytoplasmic. The helical transmembrane segment at 53-73 (LFNLVVADLLLATSLPFFAAF) threads the bilayer. The Extracellular segment spans residues 74–91 (YLKGKTWKLGHMPCQVLL). Residues 92-110 (FLLAFSRGVGVAFLTTVAL) form a helical membrane-spanning segment. At 111 to 131 (DRYLRVVHPRLRVNLLSLRAA) the chain is on the cytoplasmic side. The chain crosses the membrane as a helical span at residues 132–152 (WGISSLIWLLMVVLTPQNLLT). Residues 153–180 (CRTTQNSTECPSFYPTGGAKAIATCQEV) are Extracellular-facing. Residues 181 to 201 (LFFLQVLLPFGLISFCNSGLI) form a helical membrane-spanning segment. Residues 202–219 (RTLQKRLRESDKQPRIRR) lie on the Cytoplasmic side of the membrane. A helical membrane pass occupies residues 220–240 (ARVLVAIVLLLFGLCFLPSVL). Residues 241 to 265 (TRVLVHIFQEFKSCSVQQAIVRASD) lie on the Extracellular side of the membrane. A helical transmembrane segment spans residues 266 to 284 (IAGSLTCLHSTLSPAIYCF). Topologically, residues 285–319 (SNPAFTHSYRKVLKSLRGRRKAAESPSDNLRDSYS) are cytoplasmic.

The protein belongs to the G-protein coupled receptor 1 family. Interacts with KRAS; in a farnesylation-dependent manner.

The protein localises to the cell membrane. Functionally, high-affinity receptor for 12-(S)-hydroxy-5,8,10,14-eicosatetraenoic acid (12-S-HETE), with much lower affinities for other HETE isomers. 12-S-HETE is a eicosanoid, a 12-lipoxygenase (ALOX12) metabolite of arachidonic acid, involved in many physiologic and pathologic processes, such as cell growth, adhesion, inflammation and cancer promotion. 12-S-HETE-binding leads to activation of ERK1/2 (MAPK3/MAPK1), MEK, and NF-kappa-B pathways and leads to cell growth. Plays a crucial role for proliferation, survival and macropinocytosis of KRAS-dependent cancer cells by mediating the translocation of KRAS from the endoplasmic reticulum to the plasma membrane (PM) and its association with the PM. Contributes to enhanced immune responses by inducing dendrite protrusion of small intestinal CX3CR1(+) phagocytes for the uptake of luminal antigens. Also acts as a key receptor for 12-(S)-HETE-mediated liver ischemia reperfusion injury. In terms of biological role, proton-sensing G protein-coupled receptor. This Mus musculus (Mouse) protein is 12-(S)-hydroxy-5,8,10,14-eicosatetraenoic acid receptor (Gpr31).